Here is a 1141-residue protein sequence, read N- to C-terminus: DNA-directed RNA polymerase subunit beta (1141 aa).

Belongs to the RNA polymerase beta chain family. In terms of assembly, the RNAP catalytic core consists of 2 alpha, 1 beta, 1 beta' and 1 omega subunit. When a sigma factor is associated with the core the holoenzyme is formed, which can initiate transcription.

It catalyses the reaction RNA(n) + a ribonucleoside 5'-triphosphate = RNA(n+1) + diphosphate. Functionally, DNA-dependent RNA polymerase catalyzes the transcription of DNA into RNA using the four ribonucleoside triphosphates as substrates. This Parafrankia sp. (strain EAN1pec) protein is DNA-directed RNA polymerase subunit beta.